Consider the following 354-residue polypeptide: Phosphate acyltransferase (354 aa).

Belongs to the PlsX family. In terms of assembly, homodimer. Probably interacts with PlsY.

It is found in the cytoplasm. It catalyses the reaction a fatty acyl-[ACP] + phosphate = an acyl phosphate + holo-[ACP]. It participates in lipid metabolism; phospholipid metabolism. In terms of biological role, catalyzes the reversible formation of acyl-phosphate (acyl-PO(4)) from acyl-[acyl-carrier-protein] (acyl-ACP). This enzyme utilizes acyl-ACP as fatty acyl donor, but not acyl-CoA. This Nitrobacter hamburgensis (strain DSM 10229 / NCIMB 13809 / X14) protein is Phosphate acyltransferase.